Reading from the N-terminus, the 347-residue chain is MRIEEDLKLGFKDVLIRPKRSTLKSRSDVELERQFTFKHSGQTWSGVPIIAANMDTVGTFEMAQALAGFDILTAVHKHYSVEEWAAFINTASADVLKHVMVSTGTSDADFEKTVQILALNPALNFVCIDVANGYSEHFVQFVAKAREAWPSKTICAGNVVTGEMCEELILSGADIVKVGIGPGSVCTTRVKTGVGYPQLSAVIECADAAHGLGGMIVSDGGCTMPGDVAKAFGGGADFVMLGGMLAGHEESGGSVVEENGEKFMLFYGMSSESAMNRHVGGVAKYRAAEGKTVKLPLRGPVGNTARDILGGLRSACTYVGASRLKELTKRTTFIRVQEQENRIFNSL.

108-131 (ADFEKTVQILALNPALNFVCIDVA) lines the NADP(+) pocket. K(+)-binding residues include G181 and G183. Catalysis depends on C186, which acts as the Thioimidate intermediate. 216–239 (IVSDGGCTMPGDVAKAFGGGADFV) contacts NADP(+).

It belongs to the IMPDH/GMPR family. GuaC type 1 subfamily. In terms of assembly, homotetramer.

It carries out the reaction IMP + NH4(+) + NADP(+) = GMP + NADPH + 2 H(+). Functionally, catalyzes the irreversible NADPH-dependent deamination of GMP to IMP. It functions in the conversion of nucleobase, nucleoside and nucleotide derivatives of G to A nucleotides, and in maintaining the intracellular balance of A and G nucleotides. This chain is GMP reductase, found in Salmonella typhi.